We begin with the raw amino-acid sequence, 401 residues long: Large ribosomal subunit protein uL3 (401 aa).

The interval 1-22 (MSHRKFSAPRHGHMGFTPKKRS) is disordered.

The protein belongs to the universal ribosomal protein uL3 family.

The protein resides in the cytoplasm. Its function is as follows. The L3 protein is a component of the large subunit of cytoplasmic ribosomes. This is Large ribosomal subunit protein uL3 (rpl-3) from Caenorhabditis elegans.